The chain runs to 474 residues: Vitamin D-binding protein (474 aa).

Positions 1–16 are cleaved as a signal peptide; the sequence is MKRVLVLLLAVAFGHA. 3 consecutive Albumin domains span residues 17–208, 209–394, and 395–474; these read LERG…QLKH, LSLL…LLKK, and ELSS…KNIL. Disulfide bonds link cysteine 29/cysteine 75, cysteine 74/cysteine 83, cysteine 96/cysteine 112, cysteine 111/cysteine 122, cysteine 145/cysteine 190, cysteine 189/cysteine 198, cysteine 220/cysteine 266, cysteine 265/cysteine 273, cysteine 286/cysteine 300, cysteine 299/cysteine 311, cysteine 335/cysteine 376, cysteine 375/cysteine 384, cysteine 407/cysteine 453, and cysteine 452/cysteine 462.

It belongs to the ALB/AFP/VDB family. Associates with membrane-bound immunoglobulin on the surface of B-lymphocytes and with IgG Fc receptor on the membranes of T-lymphocytes. Interacts with LRP2; the interaction is required for renal uptake of GC in complex with 25-hydroxyvitamin D3. Allele GC*1S is O-glycosylated at Thr-436. The trisaccharide sugar moiety can be modified by the successive removal of neuraminic acid and galactose leaving an O-mceeN-acetyl-galactosamine. This conversion is thought to produce a macrophage-activating factor (Gc-MAF). Only a minor proportion of plasma GC is O-glycosylated. The potential N-glycosylation site predicted at Asn-288 is thought to be nonglycosylated. In terms of tissue distribution, expressed in the liver. Found in plasma, ascites, cerebrospinal fluid and urine.

It is found in the secreted. In terms of biological role, involved in vitamin D transport and storage, scavenging of extracellular G-actin, enhancement of the chemotactic activity of C5 alpha for neutrophils in inflammation and macrophage activation. This chain is Vitamin D-binding protein (GC), found in Homo sapiens (Human).